A 475-amino-acid chain; its full sequence is MHFETVIGLEVHVELKTDSKMFSPSPAHFGAEPNSNTNVIDLAYPGVLPVVNRRAVDWAMRASMALNMDIATNSKFDRKNYFYPDNPKAYQISQFDQPIGENGYIDIEVDGETKRIGITRLHMEEDAGKSTHKDGYSLVDLNRQGTPLIEIVSEPDIRSPKEAYAYLEKLRSIIQYTGVSDCKMEEGSLRCDANISLRPYGQKEFGTKTELKNLNSFNYVKKGLEYEEKRQEEELLNGGEIGQETRRFDESTGKTILMRVKEGSDDYRYFPEPDIVPLYVDEDWKARVRETIPELPDERKAKYVNDLGLPEYDAHVLTLTKEMSDFFEGAIDHGADVKLTSNWLMGGVNEYLNKNQVELKDTQLTPENLAGMIKLIEDGTMSSKIAKKVFPELAENGGDAKQIMEDKGLVQISDEATLLKFVTDALDNNPQSIEDYKNGKGKAMGFLVGQIMKASKGQANPQKVNSLLKQELDNR.

This sequence belongs to the GatB/GatE family. GatB subfamily. As to quaternary structure, heterotrimer of A, B and C subunits.

The catalysed reaction is L-glutamyl-tRNA(Gln) + L-glutamine + ATP + H2O = L-glutaminyl-tRNA(Gln) + L-glutamate + ADP + phosphate + H(+). The enzyme catalyses L-aspartyl-tRNA(Asn) + L-glutamine + ATP + H2O = L-asparaginyl-tRNA(Asn) + L-glutamate + ADP + phosphate + 2 H(+). Functionally, allows the formation of correctly charged Asn-tRNA(Asn) or Gln-tRNA(Gln) through the transamidation of misacylated Asp-tRNA(Asn) or Glu-tRNA(Gln) in organisms which lack either or both of asparaginyl-tRNA or glutaminyl-tRNA synthetases. The reaction takes place in the presence of glutamine and ATP through an activated phospho-Asp-tRNA(Asn) or phospho-Glu-tRNA(Gln). The chain is Aspartyl/glutamyl-tRNA(Asn/Gln) amidotransferase subunit B from Staphylococcus epidermidis (strain ATCC 12228 / FDA PCI 1200).